A 329-amino-acid chain; its full sequence is Ribosomal RNA small subunit methyltransferase H (329 aa).

S-adenosyl-L-methionine-binding positions include 34–36 (GGY), aspartate 52, phenylalanine 79, aspartate 100, and glutamine 107. The segment at 285 to 329 (GEDEVAHNPRARSAKLRAAERTSAPAHKDDQSSSWPRLSDVMRGG) is disordered.

Belongs to the methyltransferase superfamily. RsmH family.

It localises to the cytoplasm. The catalysed reaction is cytidine(1402) in 16S rRNA + S-adenosyl-L-methionine = N(4)-methylcytidine(1402) in 16S rRNA + S-adenosyl-L-homocysteine + H(+). Its function is as follows. Specifically methylates the N4 position of cytidine in position 1402 (C1402) of 16S rRNA. This is Ribosomal RNA small subunit methyltransferase H from Bradyrhizobium diazoefficiens (strain JCM 10833 / BCRC 13528 / IAM 13628 / NBRC 14792 / USDA 110).